A 365-amino-acid chain; its full sequence is Undecaprenyl-phosphate alpha-N-acetylglucosaminyl 1-phosphate transferase (365 aa).

Transmembrane regions (helical) follow at residues 3–23 (LLTMSTELIYIFLFSMAFLFV), 45–65 (GLIPLVGGISVFAGVCFAFLI), 99–119 (IRAFVQALVGIAMMAVAGLYL), 132–152 (VLGPFGYVVTLFAVWAAINAF), 157–177 (GIDGLLGGLSCVSFGAMGILL), 187–207 (LWCFAMIATIIPYILLNLGLL), 213–233 (VFMGDAGSTLIGFTAIWILLQ), 242–262 (INPVTALWIIAIPLMDMIAIM), 293–313 (QAFVLITLAAALLAMIGVIGE), and 315–335 (LTFIPEWVMLALFLLAFLLYG).

This sequence belongs to the glycosyltransferase 4 family. WecA subfamily. Requires Mg(2+) as cofactor. It depends on Mn(2+) as a cofactor.

The protein resides in the cell inner membrane. The catalysed reaction is di-trans,octa-cis-undecaprenyl phosphate + UDP-N-acetyl-alpha-D-glucosamine = N-acetyl-alpha-D-glucosaminyl-di-trans,octa-cis-undecaprenyl diphosphate + UMP. It participates in bacterial outer membrane biogenesis; LPS O-antigen biosynthesis. The protein operates within bacterial outer membrane biogenesis; enterobacterial common antigen biosynthesis. In terms of biological role, catalyzes the transfer of the GlcNAc-1-phosphate moiety from UDP-GlcNAc onto the carrier lipid undecaprenyl phosphate (C55-P), yielding GlcNAc-pyrophosphoryl-undecaprenyl (GlcNAc-PP-C55). The polypeptide is Undecaprenyl-phosphate alpha-N-acetylglucosaminyl 1-phosphate transferase (Yersinia pestis).